The sequence spans 115 residues: NADH-ubiquinone oxidoreductase chain 3 (115 aa).

Transmembrane regions (helical) follow at residues 3-23 (VMLA…IAFW), 55-75 (FFLV…LLPL), and 84-104 (LPTM…SLAY).

Belongs to the complex I subunit 3 family. As to quaternary structure, core subunit of respiratory chain NADH dehydrogenase (Complex I) which is composed of 45 different subunits. Interacts with TMEM186. Interacts with TMEM242.

The protein localises to the mitochondrion inner membrane. It carries out the reaction a ubiquinone + NADH + 5 H(+)(in) = a ubiquinol + NAD(+) + 4 H(+)(out). Its function is as follows. Core subunit of the mitochondrial membrane respiratory chain NADH dehydrogenase (Complex I) which catalyzes electron transfer from NADH through the respiratory chain, using ubiquinone as an electron acceptor. Essential for the catalytic activity of complex I. This chain is NADH-ubiquinone oxidoreductase chain 3, found in Felis catus (Cat).